A 198-amino-acid polypeptide reads, in one-letter code: Na(+)-translocating NADH-quinone reductase subunit E (198 aa).

6 helical membrane-spanning segments follow: residues 11 to 31, 35 to 55, 77 to 97, 110 to 130, 140 to 160, and 176 to 196; these read SVFI…FLAV, VSTA…AVPV, FLNF…LEMV, GIFL…SFMV, VVYG…LAGI, and LGIT…FSGI.

This sequence belongs to the NqrDE/RnfAE family. As to quaternary structure, composed of six subunits; NqrA, NqrB, NqrC, NqrD, NqrE and NqrF.

The protein localises to the cell inner membrane. The catalysed reaction is a ubiquinone + n Na(+)(in) + NADH + H(+) = a ubiquinol + n Na(+)(out) + NAD(+). Its function is as follows. NQR complex catalyzes the reduction of ubiquinone-1 to ubiquinol by two successive reactions, coupled with the transport of Na(+) ions from the cytoplasm to the periplasm. NqrA to NqrE are probably involved in the second step, the conversion of ubisemiquinone to ubiquinol. The polypeptide is Na(+)-translocating NADH-quinone reductase subunit E (Pasteurella multocida (strain Pm70)).